The sequence spans 388 residues: D-alanyl-D-alanine carboxypeptidase DacD (388 aa).

A signal peptide spans 1–21 (MKRRLIIAASLFVFNLSSGFA). S63 functions as the Acyl-ester intermediate in the catalytic mechanism. K66 functions as the Proton acceptor in the catalytic mechanism. S129 is a catalytic residue. Position 232 (K232) interacts with substrate.

Belongs to the peptidase S11 family.

The protein localises to the cell inner membrane. It catalyses the reaction Preferential cleavage: (Ac)2-L-Lys-D-Ala-|-D-Ala. Also transpeptidation of peptidyl-alanyl moieties that are N-acyl substituents of D-alanine.. It functions in the pathway cell wall biogenesis; peptidoglycan biosynthesis. Functionally, removes C-terminal D-alanyl residues from sugar-peptide cell wall precursors. The protein is D-alanyl-D-alanine carboxypeptidase DacD (dacD) of Escherichia coli (strain K12).